Reading from the N-terminus, the 354-residue chain is DNA polymerase IV (354 aa).

The UmuC domain maps to 6 to 187 (IIHVDCDCFY…LPVARLHGVG (182 aa)). Aspartate 10 and aspartate 105 together coordinate Mg(2+). Glutamate 106 is an active-site residue.

This sequence belongs to the DNA polymerase type-Y family. As to quaternary structure, monomer. Requires Mg(2+) as cofactor.

It is found in the cytoplasm. It carries out the reaction DNA(n) + a 2'-deoxyribonucleoside 5'-triphosphate = DNA(n+1) + diphosphate. Poorly processive, error-prone DNA polymerase involved in untargeted mutagenesis. Copies undamaged DNA at stalled replication forks, which arise in vivo from mismatched or misaligned primer ends. These misaligned primers can be extended by PolIV. Exhibits no 3'-5' exonuclease (proofreading) activity. May be involved in translesional synthesis, in conjunction with the beta clamp from PolIII. This chain is DNA polymerase IV, found in Pseudomonas putida (strain GB-1).